The following is a 66-amino-acid chain: Moricin-1 (66 aa).

Positions 1–24 are cleaved as a signal peptide; it reads MNILKFFFVFIVAMSLVSCSTAAP.

Expressed in fat body and to a lesser extent in hemocyte and Malpighian tubules.

The protein localises to the secreted. Functionally, has antibacterial activity against Gram-positive and Gram-negative bacteria. Probably acts by disturbing membrane functions with its amphipathic structure. The sequence is that of Moricin-1 (MOR1) from Bombyx mori (Silk moth).